A 356-amino-acid polypeptide reads, in one-letter code: Inositol phosphoceramide mannosyltransferase 3 (356 aa).

Residues 4–24 (ILFYFFFFLTLILSATVYLFG) form a helical membrane-spanning segment. Residues asparagine 52 and asparagine 146 are each glycosylated (N-linked (GlcNAc...) asparagine). The next 2 membrane-spanning stretches (helical) occupy residues 197-217 (FPYL…IWSA) and 269-289 (WAIF…FIFG). Serine 307, serine 353, and serine 355 each carry phosphoserine.

Belongs to the glycosyltransferase 32 family.

It localises to the endoplasmic reticulum membrane. The protein localises to the golgi apparatus. The protein resides in the cis-Golgi network membrane. Its subcellular location is the trans-Golgi network membrane. With imt1 and imt2, is required for the synthesis of mannosylinositol phosphoceramide (MIPC). Catalyzes the addition of mannosyl to inositol phosphoceramide (IPC). MIPC is essential for cell morphology, cell-surface distribution of ergosterol, localization for plasma-membrane transporters, and lipid-raft-mediated endocytosis of plasma membrane proteins to the vacuole. In Schizosaccharomyces pombe (strain 972 / ATCC 24843) (Fission yeast), this protein is Inositol phosphoceramide mannosyltransferase 3.